The primary structure comprises 144 residues: MPPKKKKLAGIIKLQIQAGQANPAPPVGPALGQHGVNIMEFCKAYNAATESQRGNVIPVEISVYEDRTFDFKLKTPPAAKLLLKAAGVQKGSAEPHRNKVAKVTMDQVREIAKTKMEDLNANDIDQAAKIIAGTARSMGITVEA.

This sequence belongs to the universal ribosomal protein uL11 family. As to quaternary structure, part of the ribosomal stalk of the 50S ribosomal subunit. Interacts with L10 and the large rRNA to form the base of the stalk. L10 forms an elongated spine to which L12 dimers bind in a sequential fashion forming a multimeric L10(L12)X complex. One or more lysine residues are methylated.

Forms part of the ribosomal stalk which helps the ribosome interact with GTP-bound translation factors. The sequence is that of Large ribosomal subunit protein uL11 from Nocardia farcinica (strain IFM 10152).